The chain runs to 480 residues: Protein nucleotidyltransferase YdiU (480 aa).

Residues Gly-86, Gly-88, Arg-89, Lys-109, Asp-121, Gly-122, Arg-172, and Arg-179 each contribute to the ATP site. Asp-248 (proton acceptor) is an active-site residue. Positions 249 and 258 each coordinate Mg(2+). Asp-258 contributes to the ATP binding site.

Belongs to the SELO family. It depends on Mg(2+) as a cofactor. Mn(2+) serves as cofactor.

The catalysed reaction is L-seryl-[protein] + ATP = 3-O-(5'-adenylyl)-L-seryl-[protein] + diphosphate. It catalyses the reaction L-threonyl-[protein] + ATP = 3-O-(5'-adenylyl)-L-threonyl-[protein] + diphosphate. It carries out the reaction L-tyrosyl-[protein] + ATP = O-(5'-adenylyl)-L-tyrosyl-[protein] + diphosphate. The enzyme catalyses L-histidyl-[protein] + UTP = N(tele)-(5'-uridylyl)-L-histidyl-[protein] + diphosphate. The catalysed reaction is L-seryl-[protein] + UTP = O-(5'-uridylyl)-L-seryl-[protein] + diphosphate. It catalyses the reaction L-tyrosyl-[protein] + UTP = O-(5'-uridylyl)-L-tyrosyl-[protein] + diphosphate. Functionally, nucleotidyltransferase involved in the post-translational modification of proteins. It can catalyze the addition of adenosine monophosphate (AMP) or uridine monophosphate (UMP) to a protein, resulting in modifications known as AMPylation and UMPylation. The chain is Protein nucleotidyltransferase YdiU from Salmonella newport (strain SL254).